We begin with the raw amino-acid sequence, 334 residues long: Oligopeptide transport ATP-binding protein OppF (334 aa).

The ABC transporter domain occupies 12–265 (LEIADLKVHF…PLHPYTKALM (254 aa)). 57–64 (GESGCGKS) is an ATP binding site.

This sequence belongs to the ABC transporter superfamily. The complex is composed of two ATP-binding proteins (OppD and OppF), two transmembrane proteins (OppB and OppC) and a solute-binding protein (OppA).

It is found in the cell inner membrane. It carries out the reaction a [peptide](out) + ATP + H2O = a [peptide](in) + ADP + phosphate + H(+). The catalysed reaction is L-alanyl-gamma-D-glutamyl-meso-2,6-diaminopimelate(out) + ATP + H2O = L-alanyl-gamma-D-glutamyl-meso-2,6-diaminopimelate(in) + ADP + phosphate + H(+). Functionally, part of the ABC transporter complex OppABCDF involved in the uptake of oligopeptides, including the cell wall murein tripeptide L-alanyl-gamma-D-glutamyl-meso-diaminopimelate. Probably responsible for energy coupling to the transport system. Plays an important nutritional role and is involved in the recycling of cell wall peptides. In Salmonella typhimurium (strain LT2 / SGSC1412 / ATCC 700720), this protein is Oligopeptide transport ATP-binding protein OppF.